Here is a 383-residue protein sequence, read N- to C-terminus: Succinyl-diaminopimelate desuccinylase (383 aa).

Zn(2+) is bound at residue histidine 73. The active site involves aspartate 75. Aspartate 107 lines the Zn(2+) pocket. The Proton acceptor role is filled by glutamate 141. Zn(2+)-binding residues include glutamate 142, glutamate 170, and histidine 356.

The protein belongs to the peptidase M20A family. DapE subfamily. In terms of assembly, homodimer. The cofactor is Zn(2+). Co(2+) serves as cofactor.

It catalyses the reaction N-succinyl-(2S,6S)-2,6-diaminopimelate + H2O = (2S,6S)-2,6-diaminopimelate + succinate. It participates in amino-acid biosynthesis; L-lysine biosynthesis via DAP pathway; LL-2,6-diaminopimelate from (S)-tetrahydrodipicolinate (succinylase route): step 3/3. Catalyzes the hydrolysis of N-succinyl-L,L-diaminopimelic acid (SDAP), forming succinate and LL-2,6-diaminopimelate (DAP), an intermediate involved in the bacterial biosynthesis of lysine and meso-diaminopimelic acid, an essential component of bacterial cell walls. This Pseudomonas aeruginosa (strain ATCC 15692 / DSM 22644 / CIP 104116 / JCM 14847 / LMG 12228 / 1C / PRS 101 / PAO1) protein is Succinyl-diaminopimelate desuccinylase.